We begin with the raw amino-acid sequence, 433 residues long: Serine hydroxymethyltransferase (433 aa).

(6S)-5,6,7,8-tetrahydrofolate is bound by residues Leu-131 and 135 to 137; that span reads GHL. Lys-240 carries the N6-(pyridoxal phosphate)lysine modification.

It belongs to the SHMT family. As to quaternary structure, homodimer. It depends on pyridoxal 5'-phosphate as a cofactor.

It is found in the cytoplasm. The enzyme catalyses (6R)-5,10-methylene-5,6,7,8-tetrahydrofolate + glycine + H2O = (6S)-5,6,7,8-tetrahydrofolate + L-serine. It participates in one-carbon metabolism; tetrahydrofolate interconversion. The protein operates within amino-acid biosynthesis; glycine biosynthesis; glycine from L-serine: step 1/1. In terms of biological role, catalyzes the reversible interconversion of serine and glycine with tetrahydrofolate (THF) serving as the one-carbon carrier. This reaction serves as the major source of one-carbon groups required for the biosynthesis of purines, thymidylate, methionine, and other important biomolecules. Also exhibits THF-independent aldolase activity toward beta-hydroxyamino acids, producing glycine and aldehydes, via a retro-aldol mechanism. The polypeptide is Serine hydroxymethyltransferase (Bifidobacterium adolescentis (strain ATCC 15703 / DSM 20083 / NCTC 11814 / E194a)).